The primary structure comprises 404 residues: Multidrug resistance protein MdtG (404 aa).

11 helical membrane passes run 19-39, 56-76, 90-110, 113-133, 144-164, 171-191, 222-242, 254-274, 288-308, 317-337, and 376-396; these read LGCF…PLYV, LVFS…GGLA, LGMA…QFLI, ALLG…ATQV, TLST…GLLA, PVFF…FFFI, LFVT…ILTL, IAFI…LSAP, ILIV…FVQT, FLLG…LVYN, and AVFC…WNSL.

Belongs to the major facilitator superfamily. DHA1 family. MdtG (TC 2.A.1.2.20) subfamily.

The protein resides in the cell inner membrane. In Salmonella dublin (strain CT_02021853), this protein is Multidrug resistance protein MdtG.